Consider the following 309-residue polypeptide: Ribonuclease Z (309 aa).

Zn(2+) contacts are provided by H63, H65, D67, H68, H145, D216, and H274. The active-site Proton acceptor is D67.

This sequence belongs to the RNase Z family. As to quaternary structure, homodimer. Zn(2+) is required as a cofactor.

The catalysed reaction is Endonucleolytic cleavage of RNA, removing extra 3' nucleotides from tRNA precursor, generating 3' termini of tRNAs. A 3'-hydroxy group is left at the tRNA terminus and a 5'-phosphoryl group is left at the trailer molecule.. Functionally, zinc phosphodiesterase, which displays some tRNA 3'-processing endonuclease activity. Probably involved in tRNA maturation, by removing a 3'-trailer from precursor tRNA. The chain is Ribonuclease Z from Streptococcus pneumoniae serotype 2 (strain D39 / NCTC 7466).